We begin with the raw amino-acid sequence, 143 residues long: Transcriptional regulator MraZ (143 aa).

SpoVT-AbrB domains lie at 5–47 and 76–119; these read TYTP…PKEE and ADEQ…DAQA.

It belongs to the MraZ family. Forms oligomers.

It is found in the cytoplasm. It localises to the nucleoid. This is Transcriptional regulator MraZ from Corynebacterium efficiens (strain DSM 44549 / YS-314 / AJ 12310 / JCM 11189 / NBRC 100395).